Here is a 161-residue protein sequence, read N- to C-terminus: MPICSLQTFADALPPGRPVLGLDLGTRTIGVATSDVRLTLATPIITIKRRKFTLDVQELFALADGRAAAGLVLGLPVEMDGSEGPRCQATRAFARNLLALRDLPVLLWDERLSTAAVNRFLVGEADMTRARRAEVVDRAAAAYILQGALDALDRQRPEQAF.

It belongs to the YqgF nuclease family.

The protein resides in the cytoplasm. Its function is as follows. Could be a nuclease involved in processing of the 5'-end of pre-16S rRNA. This is Putative pre-16S rRNA nuclease from Rhodospirillum rubrum (strain ATCC 11170 / ATH 1.1.1 / DSM 467 / LMG 4362 / NCIMB 8255 / S1).